A 214-amino-acid polypeptide reads, in one-letter code: Octanoyltransferase (214 aa).

The 176-residue stretch at 28-203 (GSGAETLLLL…RFEGFLDEFM (176 aa)) folds into the BPL/LPL catalytic domain. Residues 66-73 (RGGDVTYH), 133-135 (SIG), and 146-148 (GFA) contribute to the substrate site. Residue Cys164 is the Acyl-thioester intermediate of the active site.

This sequence belongs to the LipB family.

The protein localises to the cytoplasm. The catalysed reaction is octanoyl-[ACP] + L-lysyl-[protein] = N(6)-octanoyl-L-lysyl-[protein] + holo-[ACP] + H(+). It functions in the pathway protein modification; protein lipoylation via endogenous pathway; protein N(6)-(lipoyl)lysine from octanoyl-[acyl-carrier-protein]: step 1/2. In terms of biological role, catalyzes the transfer of endogenously produced octanoic acid from octanoyl-acyl-carrier-protein onto the lipoyl domains of lipoate-dependent enzymes. Lipoyl-ACP can also act as a substrate although octanoyl-ACP is likely to be the physiological substrate. This Geotalea uraniireducens (strain Rf4) (Geobacter uraniireducens) protein is Octanoyltransferase.